Reading from the N-terminus, the 355-residue chain is Syntaxin-5 (355 aa).

At 1-333 the chain is on the cytoplasmic side; it reads MIPRKRYGSK…KYFQSVTSNR (333 aa). Over residues 28–37 the composition is skewed to polar residues; the sequence is PATAGSSSSD. The disordered stretch occupies residues 28–51; sequence PATAGSSSSDIAPLPPPVTLVPPP. Positions 40 to 51 are enriched in pro residues; that stretch reads PLPPPVTLVPPP. The IxM motif; signal for cargo packaging into COPII-coated vesicles signature appears at 245-247; that stretch reads IDM. The t-SNARE coiled-coil homology domain occupies 263–325; it reads DSYIQSRADT…EAAHSEILKY (63 aa). Residues 287–318 are a coiled coil; that stretch reads FQQLAHMVKEQEETIQRIDENVLGAQLDVEAA. Residues 334-354 traverse the membrane as a helical; Anchor for type IV membrane protein segment; sequence WLMVKIFLILIVFFIIFVVFL. Residue alanine 355 is a topological domain, vesicular.

This sequence belongs to the syntaxin family. In terms of assembly, part of a ternary complex containing STX5A, NSFL1C and VCP. Identified in a unique SNARE complex composed of the Golgi SNAREs GOSR1, GOSR2, YKT6 and VTI1A. Component of a SNARE complex consisting of STX5, YKT6, GOSR1 and BET1L. Interacts with BET1L. Interacts with BET1. Interacts with COG4. Interacts with GM130/GOLGA2. Interacts (via IxM motif) with SEC24C and SEC24D; mediates STX5 packaging into COPII-coated vesicles. Interacts with VLDLR; this interaction mediates VLDLR translocation from the endoplasmic reticulum to the plasma membrane.

It localises to the endoplasmic reticulum-Golgi intermediate compartment membrane. Its subcellular location is the golgi apparatus membrane. Its function is as follows. Mediates endoplasmic reticulum to Golgi transport. Together with p115/USO1 and GM130/GOLGA2, involved in vesicle tethering and fusion at the cis-Golgi membrane to maintain the stacked and inter-connected structure of the Golgi apparatus. Functionally, required for Golgi to endoplasmic reticulum retrogade transport, and for intra-Golgi transport. In terms of biological role, (Microbial infection) Required for the efficient production of infectious virion during human cytomegalovirus infection. Mechanistically, participates in the formation of the cytoplasmic viral assembly compartment where tegument acquisition and envelopment occur. This is Syntaxin-5 (STX5) from Homo sapiens (Human).